The sequence spans 251 residues: Flap endonuclease Xni (251 aa).

Aspartate 104 contacts Mg(2+). A 5'-3' exonuclease domain is found at 160 to 250; that stretch reads VLPRQLPDYW…SGNLQQLRLK (91 aa). K(+) contacts are provided by leucine 171, alanine 172, proline 180, valine 182, and valine 185. The interaction with DNA stretch occupies residues 184–189; that stretch reads GVGAKT.

It belongs to the Xni family. The cofactor is Mg(2+). It depends on K(+) as a cofactor.

Functionally, has flap endonuclease activity. During DNA replication, flap endonucleases cleave the 5'-overhanging flap structure that is generated by displacement synthesis when DNA polymerase encounters the 5'-end of a downstream Okazaki fragment. This Yersinia pestis bv. Antiqua (strain Nepal516) protein is Flap endonuclease Xni.